Consider the following 165-residue polypeptide: Cyclic pyranopterin monophosphate synthase (165 aa).

Residues 76–78 and 114–115 contribute to the substrate site; these read LCH and ME. The active site involves Asp129.

The protein belongs to the MoaC family. Homohexamer; trimer of dimers.

The catalysed reaction is (8S)-3',8-cyclo-7,8-dihydroguanosine 5'-triphosphate = cyclic pyranopterin phosphate + diphosphate. It functions in the pathway cofactor biosynthesis; molybdopterin biosynthesis. Catalyzes the conversion of (8S)-3',8-cyclo-7,8-dihydroguanosine 5'-triphosphate to cyclic pyranopterin monophosphate (cPMP). In Brucella abortus (strain 2308), this protein is Cyclic pyranopterin monophosphate synthase.